The sequence spans 437 residues: Probable inactive DNA (cytosine-5)-methyltransferase DRM1B (437 aa).

UBA domains lie at 20–60 and 120–164; these read SAPS…LLQL and EMSE…IYAP. Positions 243-437 constitute an SAM-dependent MTase DRM-type domain; the sequence is VHRNLPDHAL…LIQLHTTSLC (195 aa).

It belongs to the class I-like SAM-binding methyltransferase superfamily. DRM-methyltransferase family.

Its subcellular location is the nucleus. In terms of biological role, involved in de novo DNA methylation. Involved in RNA-directed DNA methylation (RdDM). The sequence is that of Probable inactive DNA (cytosine-5)-methyltransferase DRM1B from Oryza sativa subsp. japonica (Rice).